We begin with the raw amino-acid sequence, 407 residues long: Imidazolonepropionase (407 aa).

2 residues coordinate Fe(3+): His72 and His74. The Zn(2+) site is built by His72 and His74. Positions 81, 144, and 177 each coordinate 4-imidazolone-5-propanoate. An N-formimidoyl-L-glutamate-binding site is contributed by Tyr144. His242 lines the Fe(3+) pocket. His242 is a Zn(2+) binding site. Residue Gln245 participates in 4-imidazolone-5-propanoate binding. Position 317 (Asp317) interacts with Fe(3+). Asp317 lines the Zn(2+) pocket. The N-formimidoyl-L-glutamate site is built by Asn319 and Gly321. Position 322 (Thr322) interacts with 4-imidazolone-5-propanoate.

Belongs to the metallo-dependent hydrolases superfamily. HutI family. The cofactor is Zn(2+). It depends on Fe(3+) as a cofactor.

Its subcellular location is the cytoplasm. It catalyses the reaction 4-imidazolone-5-propanoate + H2O = N-formimidoyl-L-glutamate. It participates in amino-acid degradation; L-histidine degradation into L-glutamate; N-formimidoyl-L-glutamate from L-histidine: step 3/3. Functionally, catalyzes the hydrolytic cleavage of the carbon-nitrogen bond in imidazolone-5-propanoate to yield N-formimidoyl-L-glutamate. It is the third step in the universal histidine degradation pathway. This is Imidazolonepropionase from Rhizobium rhizogenes (Agrobacterium rhizogenes).